Reading from the N-terminus, the 285-residue chain is (3S)-malyl-CoA thioesterase (285 aa).

Substrate-binding residues include arginine 70 and glutamate 122. 2 residues coordinate Mg(2+): glutamate 122 and aspartate 148.

It belongs to the HpcH/HpaI aldolase family. Homodimer or homotrimer. Mg(2+) serves as cofactor.

The catalysed reaction is (S)-malyl-CoA + H2O = (S)-malate + CoA + H(+). Functionally, catalyzes the hydrolysis of (3S)-malyl-CoA to (3S)-malate and free CoA. Inactive towards beta-methylmalyl-CoA and other CoA esters. In Cereibacter sphaeroides (strain ATCC 17025 / ATH 2.4.3) (Rhodobacter sphaeroides), this protein is (3S)-malyl-CoA thioesterase.